A 541-amino-acid polypeptide reads, in one-letter code: Transcription factor STP2 (541 aa).

The i stretch occupies residues 13-32 (VLTRIYDYLKALVQQVIVPN). The tract at residues 35-58 (DDKSSKSTPFEKLEPAKQNHPQKD) is disordered. The interval 73-105 (LFPKQNNKQLSLTSKSSVVPCALNLDNLETPFS) is II. The C2H2-type 1 zinc-finger motif lies at 204–226 (YICHYCDARFRIRGYLTRHIKKH). A C2H2-type 2; atypical zinc finger spans residues 232 to 267 (YHCPFFDNSISQELRCHTSGGFSRRDTYKTHLKSRH). A C2H2-type 3; atypical zinc finger spans residues 284–309 (GVCTQCGEHFSTSESWVENHIEAGSC). A compositionally biased stretch (low complexity) spans 452-462 (SSASSALSPLS). Residues 452–497 (SSASSALSPLSGDPITTTETNKSYPLDSEQSLLEPDKTEEDAINQS) form a disordered region. Residues 465–482 (PITTTETNKSYPLDSEQS) show a composition bias toward polar residues.

As to quaternary structure, interacts (via Region II) with SSY5; protease component of the SPS-sensor. Activated by the amino acid-induced proteolytic removal of an N-terminal inhibitory domain by serine protease SSY5, an intrinsic component of the SPS-sensor. Processing requires at least 2 components of the SCF(GRR1) ubiquitin ligase complex, namely the F-box protein GRR1 and the E2 enzyme CDC34, but does not depend on the proteasome. Processing is negatively regulated by the protein phosphatase 2A regulatory subunit RTS1.

It is found in the cell membrane. It localises to the nucleus. Its function is as follows. Transcription factor involved in the regulation of gene expression in response to extracellular amino acid levels. Synthesized as latent cytoplasmic precursor, which, upon a signal initiated by the plasma membrane SPS (SSY1-PTR3-SSY5) amino acid sensor system, becomes proteolytically activated and relocates to the nucleus, where it induces the expression of SPS-sensor-regulated genes, including the amino-acid permeases BAP2 and BAP3. Binding to promoters is facilitated by DAL81. Involved in the repression of genes subject to nitrogen catabolite repression and genes involved in stress response. Negatively regulated by inner nuclear membrane proteins ASI1, ASI2 and ASI3, which prevent unprocessed precursor forms that escape cytoplasmic anchoring from inducing SPS-sensor-regulated genes. This Saccharomyces cerevisiae (strain ATCC 204508 / S288c) (Baker's yeast) protein is Transcription factor STP2 (STP2).